A 212-amino-acid polypeptide reads, in one-letter code: Ion-translocating oxidoreductase complex subunit G (212 aa).

A helical membrane pass occupies residues 9–29 (GFLLALFALICTGLVAAVNQQ). T176 carries the FMN phosphoryl threonine modification.

This sequence belongs to the RnfG family. In terms of assembly, the complex is composed of six subunits: RnfA, RnfB, RnfC, RnfD, RnfE and RnfG. Requires FMN as cofactor.

The protein localises to the cell inner membrane. In terms of biological role, part of a membrane-bound complex that couples electron transfer with translocation of ions across the membrane. In Shewanella baltica (strain OS223), this protein is Ion-translocating oxidoreductase complex subunit G.